Here is a 332-residue protein sequence, read N- to C-terminus: Nucleoid-associated protein VIBHAR_03026 (332 aa).

The protein belongs to the YejK family.

The protein localises to the cytoplasm. It localises to the nucleoid. This is Nucleoid-associated protein VIBHAR_03026 from Vibrio campbellii (strain ATCC BAA-1116).